The following is a 210-amino-acid chain: Protein-L-isoaspartate O-methyltransferase (210 aa).

Residue Ser60 is part of the active site.

This sequence belongs to the methyltransferase superfamily. L-isoaspartyl/D-aspartyl protein methyltransferase family.

It is found in the cytoplasm. The catalysed reaction is [protein]-L-isoaspartate + S-adenosyl-L-methionine = [protein]-L-isoaspartate alpha-methyl ester + S-adenosyl-L-homocysteine. Catalyzes the methyl esterification of L-isoaspartyl residues in peptides and proteins that result from spontaneous decomposition of normal L-aspartyl and L-asparaginyl residues. It plays a role in the repair and/or degradation of damaged proteins. The polypeptide is Protein-L-isoaspartate O-methyltransferase (Xylella fastidiosa (strain M12)).